The chain runs to 128 residues: uncharacterized protein (128 aa).

High expression in pituitary gland and weak in pancreas.

This is an uncharacterized protein from Homo sapiens (Human).